A 1158-amino-acid polypeptide reads, in one-letter code: ATP-dependent helicase/deoxyribonuclease subunit B (1158 aa).

8 to 15 contacts ATP; it reads GRAGTGKS. Residues cysteine 791, cysteine 1112, cysteine 1115, and cysteine 1121 each coordinate [4Fe-4S] cluster.

This sequence belongs to the helicase family. AddB/RexB type 1 subfamily. Heterodimer of AddA and AddB. The cofactor is Mg(2+). [4Fe-4S] cluster is required as a cofactor.

Its function is as follows. The heterodimer acts as both an ATP-dependent DNA helicase and an ATP-dependent, dual-direction single-stranded exonuclease. Recognizes the chi site generating a DNA molecule suitable for the initiation of homologous recombination. The AddB subunit has 5' -&gt; 3' nuclease activity but not helicase activity. The sequence is that of ATP-dependent helicase/deoxyribonuclease subunit B from Clostridium perfringens (strain 13 / Type A).